The chain runs to 248 residues: MSFTVVIPARYQSTRLPGKPLADIGGKPMVQWVYEQASKAGADLVIVATDDQRIVDAVKAFGGEVCLTRDDHESGTERLAEVVEKYQLADDHIVVNVQGDEPLIPDTIIRQVADNLANNNAPMATLGVEIDHEDEVFNPNAVKVVLDKDGYAMYFSRASIPWDRDNYAKSPKEIHHNLLRHVGIYAYRAGFINTYINWEPSALEKVEALEQLRVLWYGEKIHVAVAIDAPPAGVDTPEDLEKVRALIG.

The protein belongs to the KdsB family.

Its subcellular location is the cytoplasm. The enzyme catalyses 3-deoxy-alpha-D-manno-oct-2-ulosonate + CTP = CMP-3-deoxy-beta-D-manno-octulosonate + diphosphate. It participates in nucleotide-sugar biosynthesis; CMP-3-deoxy-D-manno-octulosonate biosynthesis; CMP-3-deoxy-D-manno-octulosonate from 3-deoxy-D-manno-octulosonate and CTP: step 1/1. It functions in the pathway bacterial outer membrane biogenesis; lipopolysaccharide biosynthesis. Functionally, activates KDO (a required 8-carbon sugar) for incorporation into bacterial lipopolysaccharide in Gram-negative bacteria. This chain is 3-deoxy-manno-octulosonate cytidylyltransferase, found in Photobacterium profundum (strain SS9).